Here is a 180-residue protein sequence, read N- to C-terminus: Small ribosomal subunit protein bS18 (180 aa).

Disordered stretches follow at residues 1-26 (MKNK…AHKV) and 53-82 (YSDK…DKES).

Belongs to the bacterial ribosomal protein bS18 family. In terms of assembly, part of the 30S ribosomal subunit. Forms a tight heterodimer with protein bS6.

Its function is as follows. Binds as a heterodimer with protein bS6 to the central domain of the 16S rRNA, where it helps stabilize the platform of the 30S subunit. This Karelsulcia muelleri (strain GWSS) (Sulcia muelleri) protein is Small ribosomal subunit protein bS18.